The primary structure comprises 147 residues: Bis(5'-nucleosyl)-tetraphosphatase [asymmetrical] (147 aa).

Ala-2 carries the N-acetylalanine modification. Positions 2-139 (ALRACGLIIF…EMKATLQEGH (138 aa)) constitute a Nudix hydrolase domain. The Nudix box motif lies at 43-64 (GHVDPGENDLETALRETREETG).

It belongs to the Nudix hydrolase family. The cofactor is a divalent metal cation.

It carries out the reaction P(1),P(4)-bis(5'-guanosyl) tetraphosphate + H2O = GMP + GTP + 2 H(+). The catalysed reaction is a 5'-end CoA-ribonucleoside in mRNA + H2O = a 5'-end phospho-adenosine-phospho-ribonucleoside in mRNA + (R)-4'-phosphopantetheine + 2 H(+). The enzyme catalyses a 5'-end FAD-phospho-ribonucleoside in mRNA + H2O = a 5'-end phospho-adenosine-phospho-ribonucleoside in mRNA + FMN + 2 H(+). Functionally, catalyzes the asymmetric hydrolysis of diadenosine 5',5'''-P1,P4-tetraphosphate (Ap4A) to yield AMP and ATP. Exhibits decapping activity towards FAD-capped RNAs and dpCoA-capped RNAs in vitro. The protein is Bis(5'-nucleosyl)-tetraphosphatase [asymmetrical] (Nudt2) of Mus musculus (Mouse).